The chain runs to 398 residues: Alpha-2,8-sialyltransferase 8F (398 aa).

Residues 1–3 (MRP) are Cytoplasmic-facing. A helical; Signal-anchor for type II membrane protein transmembrane segment spans residues 4–24 (GGALLALLASLLLLLLLRLLW). At 25 to 398 (CPADAPGRAR…KLQFSKCEVA (374 aa)) the chain is on the lumenal side. Residues asparagine 66, asparagine 93, asparagine 151, and asparagine 196 are each glycosylated (N-linked (GlcNAc...) asparagine). 2 disulfides stabilise this stretch: cysteine 186/cysteine 335 and cysteine 200/cysteine 395. Substrate-binding positions include asparagine 214, 236–238 (NPS), and 322–324 (STG). Histidine 370 functions as the Proton donor/acceptor in the catalytic mechanism.

Belongs to the glycosyltransferase 29 family.

The protein localises to the golgi apparatus membrane. It carries out the reaction a ganglioside GM3 + CMP-N-acetyl-beta-neuraminate = a ganglioside GD3 + CMP + H(+). The catalysed reaction is a ganglioside GM3 (d18:1(4E)) + CMP-N-acetyl-beta-neuraminate = a ganglioside GD3 (d18:1(4E)) + CMP + H(+). The enzyme catalyses a ganglioside GD1a (d18:1(4E)) + CMP-N-acetyl-beta-neuraminate = a ganglioside GT1a (d18:1(4E)) + CMP + H(+). It catalyses the reaction a ganglioside GD1a + CMP-N-acetyl-beta-neuraminate = a ganglioside GT1a + CMP + H(+). It carries out the reaction a ganglioside GM1b (d18:1(4E)) + CMP-N-acetyl-beta-neuraminate = a ganglioside GD1c (d18:1(4E)) + CMP + H(+). The catalysed reaction is a ganglioside GM1b + CMP-N-acetyl-beta-neuraminate = a ganglioside GD1c + CMP + H(+). The enzyme catalyses a ganglioside GM4 (d18:1(4E)) + CMP-N-acetyl-beta-neuraminate = an N-acetyl-alpha-neuraminosyl-(2-&gt;8)-N-acetyl-alpha-neuraminosyl-(2-&gt;3)-beta-D-galactosyl-(1&lt;-&gt;1')-N-acylsphing-4-enine + CMP + H(+). It catalyses the reaction N-acetyl-alpha-neuraminosyl-(2-&gt;3)-beta-D-galactosyl-(1&lt;-&gt;1')-ceramide + CMP-N-acetyl-beta-neuraminate = N-acetyl-alpha-neuraminosyl-(2-&gt;8)-N-acetyl-alpha-neuraminosyl-(2-&gt;3)-beta-D-galactosyl-(1&lt;-&gt;1')-ceramide + CMP + H(+). It carries out the reaction a ganglioside GT1b (d18:1(4E)) + CMP-N-acetyl-beta-neuraminate = a ganglioside GQ1b (d18:1(4E)) + CMP + H(+). The catalysed reaction is a ganglioside GT1b + CMP-N-acetyl-beta-neuraminate = a ganglioside GQ1b + CMP + H(+). Its pathway is protein modification; protein glycosylation. Alpha-2,8-sialyltransferase that prefers O-glycans to N-glycans or glycolipids as acceptor substrates. The minimal acceptor substrate is the NeuAc-alpha-2,3(6)-Gal sequence at the non-reducing end of their carbohydrate groups. The protein is Alpha-2,8-sialyltransferase 8F of Homo sapiens (Human).